The sequence spans 666 residues: tRNA 5-methylaminomethyl-2-thiouridine biosynthesis bifunctional protein MnmC (666 aa).

Residues 1–253 (MSSPFVPIIT…KRHMICAHYE (253 aa)) are tRNA (mnm(5)s(2)U34)-methyltransferase. The FAD-dependent cmnm(5)s(2)U34 oxidoreductase stretch occupies residues 283 to 666 (VGGGLAGCFI…FLRKKIIQGP (384 aa)).

It in the N-terminal section; belongs to the methyltransferase superfamily. tRNA (mnm(5)s(2)U34)-methyltransferase family. The protein in the C-terminal section; belongs to the DAO family. Requires FAD as cofactor.

It is found in the cytoplasm. The enzyme catalyses 5-aminomethyl-2-thiouridine(34) in tRNA + S-adenosyl-L-methionine = 5-methylaminomethyl-2-thiouridine(34) in tRNA + S-adenosyl-L-homocysteine + H(+). Its function is as follows. Catalyzes the last two steps in the biosynthesis of 5-methylaminomethyl-2-thiouridine (mnm(5)s(2)U) at the wobble position (U34) in tRNA. Catalyzes the FAD-dependent demodification of cmnm(5)s(2)U34 to nm(5)s(2)U34, followed by the transfer of a methyl group from S-adenosyl-L-methionine to nm(5)s(2)U34, to form mnm(5)s(2)U34. The chain is tRNA 5-methylaminomethyl-2-thiouridine biosynthesis bifunctional protein MnmC from Legionella pneumophila (strain Lens).